The primary structure comprises 160 residues: Nucleotide-binding protein AHA_1129 (160 aa).

Belongs to the YajQ family.

Functionally, nucleotide-binding protein. This chain is Nucleotide-binding protein AHA_1129, found in Aeromonas hydrophila subsp. hydrophila (strain ATCC 7966 / DSM 30187 / BCRC 13018 / CCUG 14551 / JCM 1027 / KCTC 2358 / NCIMB 9240 / NCTC 8049).